The primary structure comprises 1125 residues: Phytochrome A (1125 aa).

2 stretches are compositionally biased toward low complexity: residues 1-14 (MSSSRPSHSSSNSA) and 39-48 (SGSSFDYSSS). 2 disordered regions span residues 1-22 (MSSSRPSHSSSNSARSRHSARI) and 38-64 (ESGSSFDYSSSVRVTDSVGGDQPPRSD). The 184-residue stretch at 218 to 401 (SMERLCDTMV…VFAIHVNKEL (184 aa)) folds into the GAF domain. Cys-323 is a binding site for phytochromobilin. 2 consecutive PAS domains span residues 617–687 (VTSE…LQGK) and 750–821 (DYKA…VNLG). One can recognise a Histidine kinase domain in the interval 901 to 1117 (YLKKQIWNPL…SFIISVELAG (217 aa)).

It belongs to the phytochrome family. As to quaternary structure, homodimer. Post-translationally, contains one covalently linked phytochromobilin chromophore.

Functionally, regulatory photoreceptor which exists in two forms that are reversibly interconvertible by light: the Pr form that absorbs maximally in the red region of the spectrum and the Pfr form that absorbs maximally in the far-red region. Photoconversion of Pr to Pfr induces an array of morphogenic responses, whereas reconversion of Pfr to Pr cancels the induction of those responses. Pfr controls the expression of a number of nuclear genes including those encoding the small subunit of ribulose-bisphosphate carboxylase, chlorophyll A/B binding protein, protochlorophyllide reductase, rRNA, etc. It also controls the expression of its own gene(s) in a negative feedback fashion. In Populus tremuloides (Quaking aspen), this protein is Phytochrome A (PHYA).